A 190-amino-acid chain; its full sequence is Dual specificity protein phosphatase 21 (190 aa).

The Tyrosine-protein phosphatase domain occupies 21 to 162; the sequence is SFSQITRSLF…LINYEFKLFN (142 aa). Positions 43–128 are sufficient for mitochondrial localization; the sequence is LSSNRITAIV…AYLMKYHSMS (86 aa). Catalysis depends on Cys106, which acts as the Phosphocysteine intermediate.

Belongs to the protein-tyrosine phosphatase family. Non-receptor class dual specificity subfamily. In terms of assembly, microtubule inner protein component of sperm flagellar doublet microtubules. Expressed in testis.

It is found in the cytoplasm. The protein localises to the nucleus. It localises to the mitochondrion inner membrane. The protein resides in the cytoskeleton. Its subcellular location is the flagellum axoneme. The catalysed reaction is O-phospho-L-tyrosyl-[protein] + H2O = L-tyrosyl-[protein] + phosphate. The enzyme catalyses O-phospho-L-seryl-[protein] + H2O = L-seryl-[protein] + phosphate. It catalyses the reaction O-phospho-L-threonyl-[protein] + H2O = L-threonyl-[protein] + phosphate. Protein phosphatase component of the sperm flagellar doublet microtubules. May act as a regulator of sperm motility by mediating dephosphorylation of sperm doublet microtubule proteins. Can dephosphorylate single and diphosphorylated synthetic MAPK peptides, with preference for the phosphotyrosine and diphosphorylated forms over phosphothreonine. In Homo sapiens (Human), this protein is Dual specificity protein phosphatase 21 (DUSP21).